The primary structure comprises 1578 residues: Mediator of RNA polymerase II transcription subunit 14 (1578 aa).

The LXXLL motif 1 signature appears at 49–53 (LAELL). Positions 561 to 582 (SQSVTAGGTSQSSAPSAATTES) are disordered. Low complexity predominate over residues 565-580 (TAGGTSQSSAPSAATT). Residues 739–743 (LKRLL) carry the LXXLL motif 2 motif. Disordered regions lie at residues 1009–1173 (RRRS…PDHK) and 1510–1578 (APGG…GGPN). Polar residues predominate over residues 1084–1093 (SQSHPNFNMT). Pro residues-rich tracts occupy residues 1095-1104 (PPAPHMPHPS) and 1157-1167 (PGMPRPSPRPG). Composition is skewed to gly residues over residues 1510 to 1521 (APGGPGGPGPMG) and 1547 to 1578 (MGGG…GGPN).

It belongs to the Mediator complex subunit 14 family. As to quaternary structure, component of the Mediator complex.

It localises to the nucleus. Its function is as follows. Component of the Mediator complex, a coactivator involved in the regulated transcription of nearly all RNA polymerase II-dependent genes. Mediator functions as a bridge to convey information from gene-specific regulatory proteins to the basal RNA polymerase II transcription machinery. Mediator is recruited to promoters by direct interactions with regulatory proteins and serves as a scaffold for the assembly of a functional preinitiation complex with RNA polymerase II and the general transcription factors. This is Mediator of RNA polymerase II transcription subunit 14 (MED14) from Aedes aegypti (Yellowfever mosquito).